Here is a 437-residue protein sequence, read N- to C-terminus: Protein farnesyltransferase subunit beta (437 aa).

5 PFTB repeats span residues 123-164 (ATDV…CIIG), 174-215 (REKL…SLTN), 222-263 (FEGT…VILK), 270-312 (LKSL…PLLH), and 332-374 (QQAL…SIAQ). (2E,6E)-farnesyl diphosphate-binding positions include 248–251 (HGGY) and 291–294 (RCNK). Aspartate 297 and cysteine 299 together coordinate Zn(2+). 300–303 (YSFW) lines the (2E,6E)-farnesyl diphosphate pocket. Zn(2+) is bound at residue histidine 362. A Phosphothreonine modification is found at threonine 436.

Belongs to the protein prenyltransferase subunit beta family. Heterodimer of FNTA and FNTB. Requires Zn(2+) as cofactor.

It catalyses the reaction L-cysteinyl-[protein] + (2E,6E)-farnesyl diphosphate = S-(2E,6E)-farnesyl-L-cysteinyl-[protein] + diphosphate. Functionally, essential subunit of the farnesyltransferase complex. Catalyzes the transfer of a farnesyl moiety from farnesyl diphosphate to a cysteine at the fourth position from the C-terminus of several proteins having the C-terminal sequence Cys-aliphatic-aliphatic-X. In Homo sapiens (Human), this protein is Protein farnesyltransferase subunit beta (FNTB).